The primary structure comprises 339 residues: Glycerol-3-phosphate dehydrogenase [NAD(P)+] (339 aa).

NADPH contacts are provided by serine 14, tyrosine 15, histidine 35, and lysine 109. Lysine 109, glycine 138, and threonine 140 together coordinate sn-glycerol 3-phosphate. Alanine 142 contacts NADPH. Positions 194, 247, 257, 258, and 259 each coordinate sn-glycerol 3-phosphate. The active-site Proton acceptor is the lysine 194. Arginine 258 lines the NADPH pocket. The NADPH site is built by valine 282 and glutamate 284.

Belongs to the NAD-dependent glycerol-3-phosphate dehydrogenase family.

It localises to the cytoplasm. The catalysed reaction is sn-glycerol 3-phosphate + NAD(+) = dihydroxyacetone phosphate + NADH + H(+). It catalyses the reaction sn-glycerol 3-phosphate + NADP(+) = dihydroxyacetone phosphate + NADPH + H(+). Its pathway is membrane lipid metabolism; glycerophospholipid metabolism. Functionally, catalyzes the reduction of the glycolytic intermediate dihydroxyacetone phosphate (DHAP) to sn-glycerol 3-phosphate (G3P), the key precursor for phospholipid synthesis. The chain is Glycerol-3-phosphate dehydrogenase [NAD(P)+] from Shewanella pealeana (strain ATCC 700345 / ANG-SQ1).